The sequence spans 227 residues: Cytidylate kinase (227 aa).

12–20 (GPSGAGKGT) is an ATP binding site.

The protein belongs to the cytidylate kinase family. Type 1 subfamily.

Its subcellular location is the cytoplasm. The enzyme catalyses CMP + ATP = CDP + ADP. It catalyses the reaction dCMP + ATP = dCDP + ADP. This Sodalis glossinidius (strain morsitans) protein is Cytidylate kinase.